The primary structure comprises 341 residues: Pectate trisaccharide-lyase (341 aa).

A signal peptide spans 1–27 (MKKLISIIFIFVLGVVGSLTAAVSAEA). The propeptide occupies 28–39 (ASALNSGKVNPL). 2 PbH1 repeats span residues 131-156 (ANNI…GIEG) and 158-186 (SKNI…FDVK). Ca(2+) is bound by residues Asp150, Asp180, and Asp184. Arg233 is an active-site residue. PbH1 repeat units lie at residues 262-283 (GARI…VSWY) and 287-322 (PGYW…SLDN).

The protein belongs to the polysaccharide lyase 1 family. Ca(2+) is required as a cofactor.

It is found in the secreted. The catalysed reaction is eliminative cleavage of unsaturated trigalacturonate as the major product from the reducing end of polygalacturonic acid/pectate.. Functionally, cleaves unsaturated oligo-galacturonides from pectin. The major product is trigalacturonate; digalacturonate and tetragalacturonate are also produced. Activity on methylated pectins decreases with an increasing degree of methylation. This is Pectate trisaccharide-lyase from Bacillus licheniformis (strain ATCC 14580 / DSM 13 / JCM 2505 / CCUG 7422 / NBRC 12200 / NCIMB 9375 / NCTC 10341 / NRRL NRS-1264 / Gibson 46).